The sequence spans 229 residues: Flagellar calcium-binding protein TB-1.7G (229 aa).

The disordered stretch occupies residues 1–25 (GSKNASNPKDGAASKGGKDGKTTAD). A compositionally biased stretch (basic and acidic residues) spans 16–25 (GGKDGKTTAD). EF-hand domains follow at residues 44-79 (ESKSRRIELFKQFDTNGTGKLGFREVLDGCYGILKL), 80-115 (DEFTTHLPDIVQRAFDKAKDLGNKVKGVGEEDLVEF), 126-161 (YDIFELTVMFDTMDKDGSLLLELQEFKEALPKLKEW), and 163-198 (VDITDATTVFNEIDTNGSGVVTFDEFSCWAVTKKLQ). Ca(2+) is bound by residues D57, N59, T61, K63, and E68. D139, D141, S143, E150, D176, N178, S180, and E187 together coordinate Ca(2+). Positions 202-229 (DPDDEENGANEGDGANAGDGVPAAEGSA) are disordered. The segment covering 210–221 (ANEGDGANAGDG) has biased composition (low complexity).

It belongs to the calflagin family.

It localises to the cell projection. It is found in the cilium. The protein resides in the flagellum. May contribute to the rapid motility of the trypanosomes, playing a role either in flagellar structure or in calcium metabolism. Could alternate between a GDP-bound inactive form to a calcium/GTP-bound active form. This is Flagellar calcium-binding protein TB-1.7G from Trypanosoma brucei brucei.